The primary structure comprises 500 residues: Pyridine nucleotide-disulfide oxidoreductase domain-containing protein 1 (500 aa).

M1 is modified (N-acetylmethionine).

The protein belongs to the class-I pyridine nucleotide-disulfide oxidoreductase family. PYROXD1 subfamily. FAD serves as cofactor.

It is found in the nucleus. The protein resides in the cytoplasm. Its subcellular location is the myofibril. It localises to the sarcomere. Probable FAD-dependent oxidoreductase; involved in the cellular oxidative stress response. Required for normal sarcomere structure and muscle fiber integrity. This Pongo abelii (Sumatran orangutan) protein is Pyridine nucleotide-disulfide oxidoreductase domain-containing protein 1 (PYROXD1).